The chain runs to 143 residues: Peptide methionine sulfoxide reductase MsrB (143 aa).

Residues 16–139 form the MsrB domain; the sequence is DAELRRRLTP…NSAALNFESR (124 aa). Cys55, Cys58, Cys104, and Cys107 together coordinate Zn(2+). The Nucleophile role is filled by Cys128.

It belongs to the MsrB Met sulfoxide reductase family. Zn(2+) is required as a cofactor.

It catalyses the reaction L-methionyl-[protein] + [thioredoxin]-disulfide + H2O = L-methionyl-(R)-S-oxide-[protein] + [thioredoxin]-dithiol. The sequence is that of Peptide methionine sulfoxide reductase MsrB from Burkholderia ambifaria (strain ATCC BAA-244 / DSM 16087 / CCUG 44356 / LMG 19182 / AMMD) (Burkholderia cepacia (strain AMMD)).